The sequence spans 400 residues: Acetate kinase (400 aa).

A Mg(2+)-binding site is contributed by Asn10. Lys17 serves as a coordination point for ATP. Arg91 provides a ligand contact to substrate. The active-site Proton donor/acceptor is the Asp150. ATP-binding positions include 210-214, 285-287, and 333-337; these read HLGNG, DCR, and GIGEN. Glu387 contributes to the Mg(2+) binding site.

This sequence belongs to the acetokinase family. In terms of assembly, homodimer. The cofactor is Mg(2+). Requires Mn(2+) as cofactor.

It is found in the cytoplasm. It catalyses the reaction acetate + ATP = acetyl phosphate + ADP. It participates in metabolic intermediate biosynthesis; acetyl-CoA biosynthesis; acetyl-CoA from acetate: step 1/2. Functionally, catalyzes the formation of acetyl phosphate from acetate and ATP. Can also catalyze the reverse reaction. In Pectobacterium carotovorum subsp. carotovorum (strain PC1), this protein is Acetate kinase.